A 466-amino-acid polypeptide reads, in one-letter code: Ribulose bisphosphate carboxylase large chain (466 aa).

Lysine 4 bears the N6,N6,N6-trimethyllysine mark. Residues asparagine 113 and threonine 163 each coordinate substrate. The active-site Proton acceptor is lysine 165. Position 167 (lysine 167) interacts with substrate. Residues lysine 191, aspartate 193, and glutamate 194 each coordinate Mg(2+). Lysine 191 carries the N6-carboxylysine modification. The active-site Proton acceptor is histidine 284. Substrate-binding residues include arginine 285, histidine 317, and serine 369.

This sequence belongs to the RuBisCO large chain family. Type I subfamily. Heterohexadecamer of 8 large chains and 8 small chains; disulfide-linked. The disulfide link is formed within the large subunit homodimers. The cofactor is Mg(2+). In terms of processing, the disulfide bond which can form in the large chain dimeric partners within the hexadecamer appears to be associated with oxidative stress and protein turnover.

It is found in the plastid. The protein localises to the chloroplast. The catalysed reaction is 2 (2R)-3-phosphoglycerate + 2 H(+) = D-ribulose 1,5-bisphosphate + CO2 + H2O. It catalyses the reaction D-ribulose 1,5-bisphosphate + O2 = 2-phosphoglycolate + (2R)-3-phosphoglycerate + 2 H(+). RuBisCO catalyzes two reactions: the carboxylation of D-ribulose 1,5-bisphosphate, the primary event in carbon dioxide fixation, as well as the oxidative fragmentation of the pentose substrate in the photorespiration process. Both reactions occur simultaneously and in competition at the same active site. The sequence is that of Ribulose bisphosphate carboxylase large chain from Proboscidea louisianica (Louisiana Devil's-claw).